Reading from the N-terminus, the 257-residue chain is Imidazole glycerol phosphate synthase subunit HisF (257 aa).

Catalysis depends on residues Asp12 and Asp131.

It belongs to the HisA/HisF family. Heterodimer of HisH and HisF.

It is found in the cytoplasm. It carries out the reaction 5-[(5-phospho-1-deoxy-D-ribulos-1-ylimino)methylamino]-1-(5-phospho-beta-D-ribosyl)imidazole-4-carboxamide + L-glutamine = D-erythro-1-(imidazol-4-yl)glycerol 3-phosphate + 5-amino-1-(5-phospho-beta-D-ribosyl)imidazole-4-carboxamide + L-glutamate + H(+). The protein operates within amino-acid biosynthesis; L-histidine biosynthesis; L-histidine from 5-phospho-alpha-D-ribose 1-diphosphate: step 5/9. Its function is as follows. IGPS catalyzes the conversion of PRFAR and glutamine to IGP, AICAR and glutamate. The HisF subunit catalyzes the cyclization activity that produces IGP and AICAR from PRFAR using the ammonia provided by the HisH subunit. This is Imidazole glycerol phosphate synthase subunit HisF from Hydrogenovibrio crunogenus (strain DSM 25203 / XCL-2) (Thiomicrospira crunogena).